A 370-amino-acid polypeptide reads, in one-letter code: Mitogen-activated protein kinase mpkC (370 aa).

The 280-residue stretch at 19–298 (YANVRPVGLG…AAESLEHPYL (280 aa)) folds into the Protein kinase domain. Residues 25-33 (VGLGAFGLV) and K48 each bind ATP. D140 acts as the Proton acceptor in catalysis. T170 bears the Phosphothreonine mark. Positions 170-172 (TGY) match the TXY motif. Phosphotyrosine is present on Y172.

Belongs to the protein kinase superfamily. Ser/Thr protein kinase family. MAP kinase subfamily. HOG1 sub-subfamily. Mg(2+) serves as cofactor. Dually phosphorylated on Thr-170 and Tyr-172, which activates the enzyme.

The catalysed reaction is L-seryl-[protein] + ATP = O-phospho-L-seryl-[protein] + ADP + H(+). It catalyses the reaction L-threonyl-[protein] + ATP = O-phospho-L-threonyl-[protein] + ADP + H(+). With respect to regulation, activated by tyrosine and threonine phosphorylation. Functionally, mitogen-activated protein kinase required for growth on media where sorbitol or mannitol is the sole carbon source. This chain is Mitogen-activated protein kinase mpkC (mpkC), found in Aspergillus terreus (strain NIH 2624 / FGSC A1156).